Here is a 199-residue protein sequence, read N- to C-terminus: Peroxynitrite isomerase (199 aa).

The GXWXGXG motif lies at 20–26; the sequence is GVWEGTG. Heme b is bound at residue His-190.

The protein belongs to the nitrobindin family. As to quaternary structure, homodimer. The cofactor is heme b.

It catalyses the reaction peroxynitrite = nitrate. The protein operates within nitrogen metabolism. Its function is as follows. Heme-binding protein able to scavenge peroxynitrite and to protect free L-tyrosine against peroxynitrite-mediated nitration, by acting as a peroxynitrite isomerase that converts peroxynitrite to nitrate. Therefore, this protein likely plays a role in peroxynitrite sensing and in the detoxification of reactive nitrogen and oxygen species (RNS and ROS, respectively). Is able to bind nitric oxide (NO) in vitro, but may act as a sensor of peroxynitrite levels in vivo. The polypeptide is Peroxynitrite isomerase (Clavibacter michiganensis subsp. michiganensis (strain NCPPB 382)).